The chain runs to 150 residues: HTH-type transcriptional regulator LrpA (150 aa).

Residues 5–66 form the HTH asnC-type domain; the sequence is LDDIDRILVR…RINPEAVGHL (62 aa). The H-T-H motif DNA-binding region spans 24–43; that stretch reads LSELATRAGLSVSAVQSRVR. Residues V100, G102, and E104 each coordinate L-phenylalanine.

Homohexadecamer in the absence of any added ligand. Homooctamer. Tetramer of dimers. In the presence of phenylalanine, the hexadecamer dissociates into an octamer, which further dissociates partially into lower-order oligomers.

The DNA-binding activity of LrpA is modulated by interaction of LrpA with various effector molecules, including amino acids and vitamins. The DNA binding affinity is decreased by several amino acids, including phenylalanine, tyrosine, tryptophan, histidine, leucine and aspartate. Preferentially binds to aromatic amino acids. Besides amino acids, the binding affinity is also reduced by vitamins, including B1, B3, B6, VC, B7, B9, B12, VA and VK3. Its function is as follows. Transcriptional regulator that probably plays an important role in M.tuberculosis persistence. Regulates the expression of several genes, including lat, rsmG, whiB2, lsr2 and Rv2011c. Acts by binding directly to the promoter region of the target genes. The chain is HTH-type transcriptional regulator LrpA from Mycobacterium tuberculosis (strain ATCC 25618 / H37Rv).